The sequence spans 1030 residues: Halotolerance protein 9 (1030 aa).

Positions 136-166 form a DNA-binding region, zn(2)-C6 fungal-type; it reads CDHCRKRKIRCDEVDQQTKKCSNCIKFQLPC. A disordered region spans residues 185–208; that stretch reads HHATPGESLQTSNSISNPVASSSV. Positions 196-208 are enriched in low complexity; sequence SNSISNPVASSSV. Residues Ser221 and Ser937 each carry the phosphoserine modification.

Its subcellular location is the cytoplasm. The protein localises to the nucleus. Functionally, putative transcription factor involved in halotolerance. The chain is Halotolerance protein 9 (HAL9) from Saccharomyces cerevisiae (strain ATCC 204508 / S288c) (Baker's yeast).